The primary structure comprises 351 residues: Homoserine O-acetyltransferase (351 aa).

In terms of domain architecture, AB hydrolase-1 spans 51–334 (VIWVLHALTG…IYGHDAFLIE (284 aa)). The Nucleophile role is filled by serine 146. Arginine 212 contributes to the substrate binding site. Residues aspartate 299 and histidine 328 contribute to the active site. Aspartate 329 is a binding site for substrate.

This sequence belongs to the AB hydrolase superfamily. MetX family. Homodimer.

The protein localises to the cytoplasm. The enzyme catalyses L-homoserine + acetyl-CoA = O-acetyl-L-homoserine + CoA. It participates in amino-acid biosynthesis; L-methionine biosynthesis via de novo pathway; O-acetyl-L-homoserine from L-homoserine: step 1/1. Its function is as follows. Transfers an acetyl group from acetyl-CoA to L-homoserine, forming acetyl-L-homoserine. The polypeptide is Homoserine O-acetyltransferase (Cyclobacterium marinum (strain ATCC 25205 / DSM 745 / LMG 13164 / NCIMB 1802) (Flectobacillus marinus)).